Here is an 89-residue protein sequence, read N- to C-terminus: DNA-directed RNA polymerase subunit omega (89 aa).

The protein belongs to the RNA polymerase subunit omega family. As to quaternary structure, the RNAP catalytic core consists of 2 alpha, 1 beta, 1 beta' and 1 omega subunit. When a sigma factor is associated with the core the holoenzyme is formed, which can initiate transcription.

The enzyme catalyses RNA(n) + a ribonucleoside 5'-triphosphate = RNA(n+1) + diphosphate. Promotes RNA polymerase assembly. Latches the N- and C-terminal regions of the beta' subunit thereby facilitating its interaction with the beta and alpha subunits. The chain is DNA-directed RNA polymerase subunit omega from Idiomarina loihiensis (strain ATCC BAA-735 / DSM 15497 / L2-TR).